A 191-amino-acid polypeptide reads, in one-letter code: Protein Ves (191 aa).

The protein belongs to the Ves family.

This Escherichia coli (strain 55989 / EAEC) protein is Protein Ves.